We begin with the raw amino-acid sequence, 312 residues long: Putative ring-cleaving dioxygenase MhqO (312 aa).

VOC domains follow at residues 7–131 (GIHH…IVER) and 152–269 (GFGG…IATD). Residues His10, His217, and Glu265 each coordinate Fe cation.

It belongs to the extradiol ring-cleavage dioxygenase family. Fe(2+) serves as cofactor.

The protein localises to the cytoplasm. Putative ring-cleavage dioxygenase that may contribute to the degradation of aromatic compounds. This is Putative ring-cleaving dioxygenase MhqO (mhqO) from Bacillus subtilis (strain 168).